The chain runs to 326 residues: tRNA U34 carboxymethyltransferase (326 aa).

Carboxy-S-adenosyl-L-methionine is bound by residues Lys-95, Trp-109, Lys-114, Gly-134, Val-184–Glu-185, Tyr-204, and Arg-319.

It belongs to the class I-like SAM-binding methyltransferase superfamily. CmoB family.

The catalysed reaction is carboxy-S-adenosyl-L-methionine + 5-hydroxyuridine(34) in tRNA = 5-carboxymethoxyuridine(34) in tRNA + S-adenosyl-L-homocysteine + H(+). In terms of biological role, catalyzes carboxymethyl transfer from carboxy-S-adenosyl-L-methionine (Cx-SAM) to 5-hydroxyuridine (ho5U) to form 5-carboxymethoxyuridine (cmo5U) at position 34 in tRNAs. This is tRNA U34 carboxymethyltransferase from Trichodesmium erythraeum (strain IMS101).